The primary structure comprises 329 residues: MAKLETVTLGNIGKDGKQTLVLNPRGVNPTNGVASLSQAGAVPALEKRVTVSVSQPSRNRKNYKVQVKIQNPTACTANGSCDPSVTRQAYADVTFSFTQYSTDEERAFVRTELAALLASPLLIDAIDQLNPAYWTLLIAGGGSGSKPDPVIPDPPIDPPPGTGKYTCPFAIWSLEEVYEPPTKNRPWPIYNAVELQPREFDVALKDLLGNTKWRDWDSRLSYTTVRGCRGNGYIDLDATYLATDQAMRDQKYDIREGKKPGAFGNIERFIYLKSINAYCSLSDIAAYHADGVIVGFWRDPSSGGAIPFDFTKFDKTKCPIQAVIVVPRA.

It is found in the virion. In terms of biological role, minor capsid protein. The sequence is that of Minor capsid protein A1 from Escherichia coli (Bacteriophage Q-beta).